Here is a 513-residue protein sequence, read N- to C-terminus: 2,3-bisphosphoglycerate-independent phosphoglycerate mutase (513 aa).

Mn(2+)-binding residues include Asp13 and Ser63. Catalysis depends on Ser63, which acts as the Phosphoserine intermediate. Substrate contacts are provided by residues His124, 154–155, Arg186, Arg192, 262–265, and Lys335; these read RD and RADR. The Mn(2+) site is built by Asp402, His406, Asp443, His444, and His462.

It belongs to the BPG-independent phosphoglycerate mutase family. Monomer. The cofactor is Mn(2+).

It catalyses the reaction (2R)-2-phosphoglycerate = (2R)-3-phosphoglycerate. It functions in the pathway carbohydrate degradation; glycolysis; pyruvate from D-glyceraldehyde 3-phosphate: step 3/5. In terms of biological role, catalyzes the interconversion of 2-phosphoglycerate and 3-phosphoglycerate. The protein is 2,3-bisphosphoglycerate-independent phosphoglycerate mutase of Shewanella frigidimarina (strain NCIMB 400).